We begin with the raw amino-acid sequence, 310 residues long: Glutaminase (310 aa).

Substrate-binding residues include S67, N118, E161, N168, Y192, Y244, and V262.

This sequence belongs to the glutaminase family. As to quaternary structure, homotetramer.

It catalyses the reaction L-glutamine + H2O = L-glutamate + NH4(+). In Legionella pneumophila subsp. pneumophila (strain Philadelphia 1 / ATCC 33152 / DSM 7513), this protein is Glutaminase.